A 505-amino-acid chain; its full sequence is One cut domain family member 2 (505 aa).

Disordered regions lie at residues 29-94 (LGTL…GTAA), 165-190 (KFHHPHPHHHPHHHHHHHHHHQRLSG), and 275-333 (EQHL…QLEE). Positions 35-56 (PVGGGSGGGGGGGGGGGGGGPG) are enriched in gly residues. Over residues 167 to 187 (HHPHPHHHPHHHHHHHHHHQR) the composition is skewed to basic residues. A DNA-binding region (CUT) is located at residues 325-411 (VATSGQLEEI…QRMSALRLAA (87 aa)). The homeobox DNA-binding region spans 427 to 486 (QKKSRLVFTDLQRRTLFAIFKENKRPSKEMQITISQQLGLELTTVSNFFMNARRRSLEKW).

This sequence belongs to the CUT homeobox family.

The protein resides in the nucleus. In terms of biological role, transcriptional activator. Activates the transcription of a number of liver genes such as HNF3B. In Mus musculus (Mouse), this protein is One cut domain family member 2 (Onecut2).